The following is a 514-amino-acid chain: MKKLKINYLFIGILTLLLAAALWPSIPWFGKTENHIAAIQARGVLRVSTIDSPLTYSVINGKKYGLDYELAQQFANYLGVKLKVTVRQNISQLFDDLDNGNADLLAAGLVYDSARVKNYQPGPMYYSVSQQLVYRVGQYRPRSLATVNENQLTIAPGHVVVNDLQRLKETKFPDLSWKVDDKKGSTTLLEEVISGKLDYTIADSVAIGLFQRVHPELAVALDVTDEQPVTWFSRLDDNNTLSAALLDFFNSINEDGSLARIEEKYLGHGDDFDYVDTRSFLRAVDNVLPELEPLFKKYAKEIDWRLLAAISYQESHWDPLATSPTGVRGLMMLTKNTAQSLGLTDRTDAEQSISGGARYLEDMMAKVPETVPEDERIWFALAAYNMGYAHMLDARSLTVKTKGNPDSWTDVKQRLPLLSQKPYYSKLTYGYARGHEAYAYVENIRKYQISLVGYLQEKEKQEAEAMKLAQDYPAVSPEELNKAPFPLLSFLSQSSGYLTHSPSLLFTPQKKEEK.

The first 30 residues, 1-30, serve as a signal peptide directing secretion; sequence MKKLKINYLFIGILTLLLAAALWPSIPWFG. The segment at 31–269 is non-LT domain; sequence KTENHIAAIQ…RIEEKYLGHG (239 aa). The LT domain stretch occupies residues 270 to 514; the sequence is DDFDYVDTRS…LFTPQKKEEK (245 aa). Glutamate 314 is an active-site residue.

This sequence in the N-terminal section; belongs to the bacterial solute-binding protein 3 family. In the C-terminal section; belongs to the transglycosylase Slt family.

The protein resides in the cell outer membrane. The enzyme catalyses Exolytic cleavage of the (1-&gt;4)-beta-glycosidic linkage between N-acetylmuramic acid (MurNAc) and N-acetylglucosamine (GlcNAc) residues in peptidoglycan, from either the reducing or the non-reducing ends of the peptidoglycan chains, with concomitant formation of a 1,6-anhydrobond in the MurNAc residue.. Its function is as follows. Murein-degrading enzyme that degrades murein glycan strands and insoluble, high-molecular weight murein sacculi, with the concomitant formation of a 1,6-anhydromuramoyl product. Lytic transglycosylases (LTs) play an integral role in the metabolism of the peptidoglycan (PG) sacculus. Their lytic action creates space within the PG sacculus to allow for its expansion as well as for the insertion of various structures such as secretion systems and flagella. The protein is Membrane-bound lytic murein transglycosylase F of Salmonella paratyphi A (strain ATCC 9150 / SARB42).